A 177-amino-acid polypeptide reads, in one-letter code: Large ribosomal subunit protein uL6 (177 aa).

Belongs to the universal ribosomal protein uL6 family. Part of the 50S ribosomal subunit.

In terms of biological role, this protein binds to the 23S rRNA, and is important in its secondary structure. It is located near the subunit interface in the base of the L7/L12 stalk, and near the tRNA binding site of the peptidyltransferase center. The protein is Large ribosomal subunit protein uL6 of Shewanella amazonensis (strain ATCC BAA-1098 / SB2B).